Here is a 149-residue protein sequence, read N- to C-terminus: MSENGFLFRFRDGQTYMDTWPERKELAPMFPEQRVIKATKFAVKVMPAVAVISVLTQMVFNNTAGLPQAIIIALFAISMPLQGFWWLGNRANTKLPPALASWYRELYQKIIESGAALEPMKSQPRYKELANILNKAFKQLDKTALERWF.

Helical transmembrane passes span 41-61 (FAVKVMPAVAVISVLTQMVFN) and 69-89 (AIIIALFAISMPLQGFWWLGN).

The protein belongs to the UPF0208 family.

Its subcellular location is the cell inner membrane. This chain is UPF0208 membrane protein VFMJ11_0876, found in Aliivibrio fischeri (strain MJ11) (Vibrio fischeri).